A 78-amino-acid chain; its full sequence is Large ribosomal subunit protein bL28 (78 aa).

The protein belongs to the bacterial ribosomal protein bL28 family.

The sequence is that of Large ribosomal subunit protein bL28 from Synechococcus sp. (strain JA-2-3B'a(2-13)) (Cyanobacteria bacterium Yellowstone B-Prime).